We begin with the raw amino-acid sequence, 292 residues long: MSLVSAALFGLVQALTEFLPVSSTAHLLVFGELLGHSLDDRRFRAFVTIIQAGTTLAVLIYFRADIARLVAASTRGLVRGKPLGTPEARLGWYILLGTLPAALAGKLLERRIEALGNWVIAGSLVGLGLVLLAAERLASHRRRVEDVGPGDALLIGVAQALALVPGSSRSGTTITGGMLLGFTREAAARFSFLLSVPITLAAGAYKLWSTVPDLRGEVAWTVATVVGTVVSAVAGYLVIDWLLAWLRTRTTYVFVVWRIAAGAAIAALILSGVLPAGAEAPPPPPPALHAAP.

A run of 7 helical transmembrane segments spans residues 1 to 21, 46 to 66, 88 to 108, 114 to 134, 192 to 212, 225 to 245, and 253 to 273; these read MSLVSAALFGLVQALTEFLPV, FVTIIQAGTTLAVLIYFRADI, ARLGWYILLGTLPAALAGKLL, ALGNWVIAGSLVGLGLVLLAA, FLLSVPITLAAGAYKLWSTVP, VVGTVVSAVAGYLVIDWLLAW, and VFVVWRIAAGAAIAALILSGV.

This sequence belongs to the UppP family.

It localises to the cell inner membrane. The catalysed reaction is di-trans,octa-cis-undecaprenyl diphosphate + H2O = di-trans,octa-cis-undecaprenyl phosphate + phosphate + H(+). Functionally, catalyzes the dephosphorylation of undecaprenyl diphosphate (UPP). Confers resistance to bacitracin. The sequence is that of Undecaprenyl-diphosphatase from Anaeromyxobacter dehalogenans (strain 2CP-C).